Here is an 873-residue protein sequence, read N- to C-terminus: Zinc finger X-linked protein ZXDB (873 aa).

5 disordered regions span residues 1–23, 48–120, 138–184, 240–259, and 301–330; these read MEIP…GCPA, RGAQ…GGSR, VETV…LSAV, EPGV…GALI, and AEPA…GPAG. Gly residues-rich tracts occupy residues 14 to 23 and 85 to 120; these read QGAGGGGCPA and SGGG…GGSR. Arg-89 is modified (omega-N-methylarginine). Residues 150–165 show a composition bias toward basic and acidic residues; the sequence is VRREEAGAGPRPERRQ. Residues 240–255 show a composition bias toward pro residues; the sequence is EPGVAPFPQPQPPPQP. Low complexity predominate over residues 316–327; the sequence is APAAAAAQSPRG. 10 C2H2-type zinc fingers span residues 340–364, 373–397, 403–427, 433–455, 462–486, 493–517, 523–547, 553–577, 583–607, and 616–641; these read YLCP…LLTH, FKCP…LQSH, FGCP…MKGH, FKCE…QRSH, YQCA…NRAH, FACS…LRSH, FLCD…KRKH, FTCP…SITH, FVCP…SKKH, and SRCP…TKRH. The interval 340–646 is required for interaction with ZXDC; sequence YLCPEAQCGQ…MTKRHNLSQD (307 aa). The interval 645 to 776 is required for transcriptional activation; the sequence is QDLLAQLEAA…DMDDVSAGNV (132 aa).

It belongs to the ZXD family. As to quaternary structure, self-associates. Interacts with ZXDC and CIITA.

The protein localises to the nucleus. In terms of biological role, cooperates with CIITA to promote transcription of MHC class I and MHC class II genes. The sequence is that of Zinc finger X-linked protein ZXDB (Zxdb) from Mus musculus (Mouse).